The following is a 213-amino-acid chain: Dimethylamine corrinoid protein (213 aa).

A B12-binding N-terminal domain is found at 1-90; the sequence is MSKEELLQEL…LMPEGASGSK (90 aa). A B12-binding domain is found at 91 to 213; it reads LGVIVNGTVE…AVAKAKELLA (123 aa). His-104 is a methylcob(III)alamin binding site.

This sequence belongs to the methylamine corrinoid protein family. In terms of assembly, copurifies with MtbA.

It participates in one-carbon metabolism; methanogenesis from dimethylamine. In terms of biological role, acts as a methyl group carrier between MtbB1 and MtbA. Binds 1 corrinoid cofactor per protein, is subsequently demethylated by MtbA. This chain is Dimethylamine corrinoid protein, found in Methanosarcina barkeri.